We begin with the raw amino-acid sequence, 476 residues long: UDP-N-acetylmuramate--L-alanine ligase (476 aa).

Residue 123-129 coordinates ATP; sequence GTHGKTT.

Belongs to the MurCDEF family.

Its subcellular location is the cytoplasm. The enzyme catalyses UDP-N-acetyl-alpha-D-muramate + L-alanine + ATP = UDP-N-acetyl-alpha-D-muramoyl-L-alanine + ADP + phosphate + H(+). It participates in cell wall biogenesis; peptidoglycan biosynthesis. Its function is as follows. Cell wall formation. The polypeptide is UDP-N-acetylmuramate--L-alanine ligase (Nitrosococcus oceani (strain ATCC 19707 / BCRC 17464 / JCM 30415 / NCIMB 11848 / C-107)).